A 352-amino-acid chain; its full sequence is tRNA pseudouridine synthase D (352 aa).

Catalysis depends on D81, which acts as the Nucleophile. In terms of domain architecture, TRUD spans 157–303; that stretch reads GVPNYFGLQR…MAHERRILRL (147 aa).

This sequence belongs to the pseudouridine synthase TruD family.

It catalyses the reaction uridine(13) in tRNA = pseudouridine(13) in tRNA. Its function is as follows. Responsible for synthesis of pseudouridine from uracil-13 in transfer RNAs. This is tRNA pseudouridine synthase D from Ectopseudomonas mendocina (strain ymp) (Pseudomonas mendocina).